Here is a 509-residue protein sequence, read N- to C-terminus: ATP synthase subunit beta, mitochondrial (509 aa).

The transit peptide at 1 to 32 (MVLPRLIPRLSRSAFKVAQANNRVFNAPFRGM) directs the protein to the mitochondrion. 189–196 (GAGVGKTV) is a binding site for ATP.

In terms of assembly, F-type ATP synthases have 2 components, the catalytic core F(1) and the membrane-embedded component F(0), linked together by a central stalk and a peripheral stalk. The central stalk, also called rotor shaft, is often seen as part of F(1). The peripheral stalk is seen as part of F(0). F(0) contains the membrane channel next to the rotor. F-type ATP synthases form dimers but each monomer functions independently in ATP generation. The dimer consists of 17 different polypeptides: ATP1 (subunit alpha, 3 molecules per monomer, part of F(1)), ATP2 (subunit beta, 3 copies per monomer, part of F(1)), ATP3 (subunit gamma, part of the central stalk), ATP4 (subunit b, part of the peripheral stalk), ATP5/OSCP (subunit 5/OSCP, part of the peripheral stalk), ATP6 (subunit a, part of the peripheral stalk), ATP7 (subunit d, part of the peripheral stalk), ATP8 (subunit 8, part of the peripheral stalk), OLI1 (subunit c, part of the rotor, 10 molecules per monomer), ATP14 (subunit h, part of the peripheral stalk), ATP15 (subunit epsilon, part of the central stalk), ATP16 (subunit delta, part of the central stalk), ATP17 (subunit f, part of the peripheral stalk), ATP18 (subunit i/j, part of the peripheral stalk), ATP19 (subunit k, dimer-specific, at interface between monomers), ATP20 (subunit g, at interface between monomers), TIM11 (subunit e, at interface between monomers).

The protein resides in the mitochondrion inner membrane. It carries out the reaction ATP + H2O + 4 H(+)(in) = ADP + phosphate + 5 H(+)(out). Mitochondrial membrane ATP synthase (F(1)F(0) ATP synthase or Complex V) produces ATP from ADP in the presence of a proton gradient across the membrane which is generated by electron transport complexes of the respiratory chain. F-type ATP synthases consist of two structural domains, F(1) - containing the extramembraneous catalytic core, and F(0) - containing the membrane proton channel, linked together by a central stalk and a peripheral stalk. During catalysis, ATP synthesis in the catalytic domain of F(1) is coupled via a rotary mechanism of the central stalk subunits to proton translocation. Subunits alpha/ATP1 and beta/ATP2 form the catalytic core in F(1). Rotation of the central stalk against the surrounding alpha/ATP1(3)beta/ATP2(3) subunits leads to hydrolysis of ATP in three separate catalytic sites on the beta/ATP2 subunits. The chain is ATP synthase subunit beta, mitochondrial from Yarrowia lipolytica (strain CLIB 122 / E 150) (Yeast).